A 347-amino-acid chain; its full sequence is NADH-ubiquinone oxidoreductase chain 2 (347 aa).

Helical transmembrane passes span 3 to 23 (PPILIIIMATIMTGTMIVMLS), 25 to 45 (HWLLIWIGFEMNMLAIIPILM), 66 to 86 (ASMLLMMGVTINLLYSGQWVI), 93 to 115 (IASIMMTTALTMKLGLSPFHFWV), 149 to 169 (INTNLLMLMALTSVLVGGWGG), 178 to 198 (IMAYSSIAHMGWMAAIITYNP), 201 to 221 (MILNLTLYILMTLSTFMLFML), 237 to 257 (FPLITSMILILMLSLGGLPPL), 274 to 294 (NMIIIPTLMAITALLNLYFYL), and 325 to 345 (LLPPLIITSTMLLPLTPMLSV).

Belongs to the complex I subunit 2 family. Core subunit of respiratory chain NADH dehydrogenase (Complex I) which is composed of 45 different subunits. Interacts with TMEM242.

The protein resides in the mitochondrion inner membrane. The catalysed reaction is a ubiquinone + NADH + 5 H(+)(in) = a ubiquinol + NAD(+) + 4 H(+)(out). Its function is as follows. Core subunit of the mitochondrial membrane respiratory chain NADH dehydrogenase (Complex I) which catalyzes electron transfer from NADH through the respiratory chain, using ubiquinone as an electron acceptor. Essential for the catalytic activity and assembly of complex I. The protein is NADH-ubiquinone oxidoreductase chain 2 of Canis lupus (Gray wolf).